The sequence spans 284 residues: Probable sulfate transport system permease protein cysT (284 aa).

7 helical membrane passes run 25 to 45, 75 to 95, 107 to 127, 145 to 165, 194 to 214, 223 to 243, and 255 to 275; these read AWAL…GALL, SALI…WVLV, AAVD…LATV, VAFT…PFVV, FLRV…ALAF, SVVI…VLIF, and TVIG…INWI. One can recognise an ABC transmembrane type-1 domain in the interval 69-272; that stretch reads YAVTLSSALI…LISLTLLLAI (204 aa).

This sequence belongs to the binding-protein-dependent transport system permease family. CysTW subfamily.

The protein resides in the plastid. The protein localises to the chloroplast membrane. Functionally, part of the ABC transporter complex cysAWTP (TC 3.A.1.6.1) involved in sulfate/thiosulfate import. Probably responsible for the translocation of the substrate across the membrane. In Nephroselmis olivacea (Green alga), this protein is Probable sulfate transport system permease protein cysT (cysT).